The chain runs to 71 residues: Small ribosomal subunit protein bS18 (71 aa).

It belongs to the bacterial ribosomal protein bS18 family. As to quaternary structure, part of the 30S ribosomal subunit. Forms a tight heterodimer with protein bS6.

Functionally, binds as a heterodimer with protein bS6 to the central domain of the 16S rRNA, where it helps stabilize the platform of the 30S subunit. The polypeptide is Small ribosomal subunit protein bS18 (Synechocystis sp. (strain ATCC 27184 / PCC 6803 / Kazusa)).